A 269-amino-acid chain; its full sequence is Proenkephalin-A (269 aa).

The signal sequence occupies residues 1-24; it reads MAQFLRLCIWLLALGSCLLATVQA. Disulfide bonds link cysteine 26–cysteine 48, cysteine 30–cysteine 52, and cysteine 33–cysteine 65. A disordered region spans residues 165 to 191; that stretch reads DNRAKDSHQQESTNNDEDSTSKRYGGF. 2 consecutive propeptides follow at residues 198 to 209 and 219 to 229; these read SPQLEDEAKELQ and VGRPEWWMDYQ. Serine 253 carries the post-translational modification Phosphoserine.

Belongs to the opioid neuropeptide precursor family. Post-translationally, proenkephalin-A is cleaved by CTSL to generate Met-enkephalin. In terms of processing, processed and degraded by ACE. Probably cleaved by ACE. Post-translationally, processed by ACE to generate Met-enkephalin in the nucleus accumbens of the brain. In terms of processing, the N-terminal domain contains 6 conserved cysteines thought to be involved in disulfide bonding and/or processing. In terms of tissue distribution, expressed in brain, heart and testis.

The protein resides in the secreted. Its subcellular location is the cytoplasmic vesicle. The protein localises to the secretory vesicle. It localises to the chromaffin granule lumen. In terms of biological role, neuropeptide that competes with and mimic the effects of opiate drugs. They play a role in a number of physiologic functions, including pain perception and responses to stress. Its function is as follows. Met-enkephalin-Arg-Phe neuropeptide acts as a strong ligand of Mu-type opioid receptor OPRM1. Met-enkephalin-Arg-Phe-binding to OPRM1 in the nucleus accumbens of the brain increases activation of OPRM1, leading to long-term synaptic depression of glutamate release. Functionally, increases glutamate release in the striatum and decreases GABA concentration in the striatum. Increases glutamate release in the striatum. This Rattus norvegicus (Rat) protein is Proenkephalin-A (Penk).